A 182-amino-acid polypeptide reads, in one-letter code: Glycerol-3-phosphate acyltransferase 1 (182 aa).

5 consecutive transmembrane segments (helical) span residues 5 to 25 (MQFL…AYIV), 54 to 74 (GYFI…VAVA), 81 to 101 (PTFV…PVLF), 117 to 137 (IAFD…FYLI), and 157 to 177 (ILYS…VLIL).

This sequence belongs to the PlsY family. Probably interacts with PlsX.

The protein localises to the cell membrane. The catalysed reaction is an acyl phosphate + sn-glycerol 3-phosphate = a 1-acyl-sn-glycero-3-phosphate + phosphate. The protein operates within lipid metabolism; phospholipid metabolism. Functionally, catalyzes the transfer of an acyl group from acyl-phosphate (acyl-PO(4)) to glycerol-3-phosphate (G3P) to form lysophosphatidic acid (LPA). This enzyme utilizes acyl-phosphate as fatty acyl donor, but not acyl-CoA or acyl-ACP. The sequence is that of Glycerol-3-phosphate acyltransferase 1 from Bacillus cereus (strain ATCC 14579 / DSM 31 / CCUG 7414 / JCM 2152 / NBRC 15305 / NCIMB 9373 / NCTC 2599 / NRRL B-3711).